A 261-amino-acid chain; its full sequence is uncharacterized protein (261 aa).

Residues Ile33, Asp78, and Asn105 each coordinate NADP(+). Ser157 acts as the Proton donor in catalysis. Residues Tyr172, Lys176, and Ser206 each coordinate NADP(+). Tyr172 (proton acceptor) is an active-site residue. Lys176 functions as the Lowers pKa of active site Tyr in the catalytic mechanism.

This sequence belongs to the short-chain dehydrogenases/reductases (SDR) family.

Its subcellular location is the cytoplasm. It localises to the nucleus. This is an uncharacterized protein from Schizosaccharomyces pombe (strain 972 / ATCC 24843) (Fission yeast).